We begin with the raw amino-acid sequence, 92 residues long: Small ribosomal subunit protein uS19 (92 aa).

It belongs to the universal ribosomal protein uS19 family.

Functionally, protein S19 forms a complex with S13 that binds strongly to the 16S ribosomal RNA. The chain is Small ribosomal subunit protein uS19 from Nostoc sp. (strain PCC 7120 / SAG 25.82 / UTEX 2576).